Consider the following 692-residue polypeptide: Elongation factor G (692 aa).

The tr-type G domain occupies 8–282 (ENTRNIGIMA…GVVDYLPSPV (275 aa)). Residues 17–24 (AHIDAGKT), 81–85 (DTPGH), and 135–138 (NKMD) contribute to the GTP site.

Belongs to the TRAFAC class translation factor GTPase superfamily. Classic translation factor GTPase family. EF-G/EF-2 subfamily.

It localises to the cytoplasm. Its function is as follows. Catalyzes the GTP-dependent ribosomal translocation step during translation elongation. During this step, the ribosome changes from the pre-translocational (PRE) to the post-translocational (POST) state as the newly formed A-site-bound peptidyl-tRNA and P-site-bound deacylated tRNA move to the P and E sites, respectively. Catalyzes the coordinated movement of the two tRNA molecules, the mRNA and conformational changes in the ribosome. This Anoxybacillus flavithermus (strain DSM 21510 / WK1) protein is Elongation factor G.